We begin with the raw amino-acid sequence, 205 residues long: Proteasome subunit beta type-3 (205 aa).

Ser2 bears the N-acetylserine mark. Lys77 carries the post-translational modification N6-acetyllysine.

This sequence belongs to the peptidase T1B family. In terms of assembly, the 26S proteasome consists of a 20S proteasome core and two 19S regulatory subunits. The 20S proteasome core is a barrel-shaped complex made of 28 subunits that are arranged in four stacked rings. The two outer rings are each formed by seven alpha subunits, and the two inner rings are formed by seven beta subunits. The proteolytic activity is exerted by three beta-subunits PSMB5, PSMB6 and PSMB7. (Microbial infection) Interacts with HIV-1 TAT protein.

Its subcellular location is the cytoplasm. It localises to the nucleus. In terms of biological role, non-catalytic component of the 20S core proteasome complex involved in the proteolytic degradation of most intracellular proteins. This complex plays numerous essential roles within the cell by associating with different regulatory particles. Associated with two 19S regulatory particles, forms the 26S proteasome and thus participates in the ATP-dependent degradation of ubiquitinated proteins. The 26S proteasome plays a key role in the maintenance of protein homeostasis by removing misfolded or damaged proteins that could impair cellular functions, and by removing proteins whose functions are no longer required. Associated with the PA200 or PA28, the 20S proteasome mediates ubiquitin-independent protein degradation. This type of proteolysis is required in several pathways including spermatogenesis (20S-PA200 complex) or generation of a subset of MHC class I-presented antigenic peptides (20S-PA28 complex). The chain is Proteasome subunit beta type-3 from Homo sapiens (Human).